Here is a 459-residue protein sequence, read N- to C-terminus: MTENQTAHVRALILDATPLITQSYTHYQNYAQSFYTTPTVFQEIKDAQARKNLEIWQSLGTLKLVHPSENSIAKVSTFAKLTGDYSVLSANDLHILALTYELEIKLNNGDWRLRKKPGDALDASKADVGTDGKQKLTEDNKKEEDSESVPKKKNKRRGGKKQKAKREAREAREAENANLELESKAEEHVEEAGSKEQICNDENIKESSDLNEVFEDADDDGDWITPENLTEAIIKDSGEDTTGSLGVEASEEDRHVALNRPENQVALATGDFAVQNVALQMNLNLMNFMSGLKIKRIRNYMLRCHACFKIFPLPKDGKPKHFCASCGGQGTLLRCAVSVDSRTGNVTPHLKSNFQWNNRGNRYSVASPLSKNSQKRYGKKGHVHSKPQENVILREDQKEYEKVIKQEEWTRRHNEKILNNWIGGGSADNYISPFAITGLKQHNVRIGKGRYVNSSKRRS.

In terms of domain architecture, PINc spans 10 to 115; sequence RALILDATPL…LNNGDWRLRK (106 aa). Over residues 120–150 the composition is skewed to basic and acidic residues; the sequence is ALDASKADVGTDGKQKLTEDNKKEEDSESVP. Residues 120–205 are disordered; sequence ALDASKADVG…EQICNDENIK (86 aa). The segment covering 151–164 has biased composition (basic residues); that stretch reads KKKNKRRGGKKQKA. Over residues 165 to 194 the composition is skewed to basic and acidic residues; the sequence is KREAREAREAENANLELESKAEEHVEEAGS. Zn(2+) is bound by residues cysteine 304, cysteine 307, cysteine 323, and cysteine 326. A disordered region spans residues 366–385; the sequence is ASPLSKNSQKRYGKKGHVHS. Over residues 373 to 385 the composition is skewed to basic residues; sequence SQKRYGKKGHVHS.

This sequence belongs to the NOB1 family. In terms of assembly, component of the small ribosomal subunit, ribosomal RNA processing complex (SSU RRP complex). Interacts with PNO1.

It localises to the cytoplasm. Its subcellular location is the nucleus. The protein resides in the nucleolus. It is found in the endoplasmic reticulum. Required for the synthesis of 40S ribosome subunits. Has a role in processing 20S pre-rRNA into the mature 18S rRNA, where it is required for cleavage at the 3' end of the mature 18S rRNA (D-site). Accompanies the 20S pre-rRNA from the nucleus to the cytoplasm. In association with NIN1, may promote the recruitment of the proteasome to the ribosomal subunits stalled in maturation. This is 20S-pre-rRNA D-site endonuclease NOB1 (NOB1) from Saccharomyces cerevisiae (strain ATCC 204508 / S288c) (Baker's yeast).